The primary structure comprises 57 residues: Large ribosomal subunit protein uL30 (57 aa).

The protein belongs to the universal ribosomal protein uL30 family. Part of the 50S ribosomal subunit.

This is Large ribosomal subunit protein uL30 from Clostridium acetobutylicum (strain ATCC 824 / DSM 792 / JCM 1419 / IAM 19013 / LMG 5710 / NBRC 13948 / NRRL B-527 / VKM B-1787 / 2291 / W).